Consider the following 117-residue polypeptide: MEIGVDIVEIARIRAVYERSGKAFMNKVLTAAEIEQCLAKPDPAVSLAGRFAAKEAISKALGSGIGHKLGWHSIEVLNNEAGKPEVTLHAPHLSYRVSISISHDRHSAVAMALVQPL.

Positions 6 and 55 each coordinate Mg(2+).

It belongs to the P-Pant transferase superfamily. AcpS family. Requires Mg(2+) as cofactor.

The protein resides in the cytoplasm. It carries out the reaction apo-[ACP] + CoA = holo-[ACP] + adenosine 3',5'-bisphosphate + H(+). Functionally, transfers the 4'-phosphopantetheine moiety from coenzyme A to a Ser of acyl-carrier-protein. The polypeptide is Holo-[acyl-carrier-protein] synthase (Chlorobaculum parvum (strain DSM 263 / NCIMB 8327) (Chlorobium vibrioforme subsp. thiosulfatophilum)).